We begin with the raw amino-acid sequence, 148 residues long: Single-stranded DNA-binding protein 2 (148 aa).

The 106-residue stretch at 4-109 (INSVIIAGNL…IKARRIQFLN (106 aa)) folds into the SSB domain.

Homotetramer.

In Chlorobaculum tepidum (strain ATCC 49652 / DSM 12025 / NBRC 103806 / TLS) (Chlorobium tepidum), this protein is Single-stranded DNA-binding protein 2 (ssb2).